The following is a 192-amino-acid chain: Large ribosomal subunit protein bL25 (192 aa).

The protein belongs to the bacterial ribosomal protein bL25 family. CTC subfamily. Part of the 50S ribosomal subunit; part of the 5S rRNA/L5/L18/L25 subcomplex. Contacts the 5S rRNA. Binds to the 5S rRNA independently of L5 and L18.

This is one of the proteins that binds to the 5S RNA in the ribosome where it forms part of the central protuberance. This is Large ribosomal subunit protein bL25 from Solidesulfovibrio magneticus (strain ATCC 700980 / DSM 13731 / RS-1) (Desulfovibrio magneticus).